We begin with the raw amino-acid sequence, 798 residues long: Transferrin receptor protein 2 (798 aa).

Residues M1–P81 lie on the Cytoplasmic side of the membrane. The Endocytosis signal motif lies at Y23–V26. The chain crosses the membrane as a helical; Signal-anchor for type II membrane protein span at residues Y82–F102. Residues R103–F798 lie on the Extracellular side of the membrane. N-linked (GlcNAc...) asparagine glycans are attached at residues N235, N334, and N535.

The protein belongs to the peptidase M28 family. M28B subfamily. Predominantly expressed in liver. Also expressed in kidney, spleen, brain, lung, heart and muscle with very low expression in kidney, muscle and heart.

The protein localises to the cell membrane. Its subcellular location is the cytoplasm. Mediates cellular uptake of transferrin-bound iron in a non-iron dependent manner. May be involved in iron metabolism, hepatocyte function and erythrocyte differentiation. This is Transferrin receptor protein 2 (Tfr2) from Mus musculus (Mouse).